A 388-amino-acid polypeptide reads, in one-letter code: Protein TsgA homolog (388 aa).

12 consecutive transmembrane segments (helical) span residues 11 to 31 (WISF…GMIM), 50 to 70 (TFLN…IEII), 77 to 97 (IFSF…NSIF), 101 to 121 (INMF…TFII), 133 to 153 (LLLL…IVTA), 160 to 180 (IIWY…FLLT), 206 to 226 (VFLL…FISW), 244 to 264 (SLVS…SFII), 268 to 288 (NLYR…YCFI), 298 to 318 (YIII…ITLA), 332 to 352 (LILL…SPIV), and 360 to 380 (TLIS…LIYF).

The protein belongs to the major facilitator superfamily. TsgA family.

The protein localises to the cell membrane. The sequence is that of Protein TsgA homolog from Buchnera aphidicola subsp. Acyrthosiphon pisum (strain Tuc7).